The sequence spans 559 residues: Beta-glucuronidase (559 aa).

An N-terminal signal peptide occupies residues 1–19 (MKRILGLIAYASVPTVINA). 4 N-linked (GlcNAc...) asparagine glycosylation sites follow: Asn53, Asn91, Asn99, and Asn143. The active-site Proton donor is the Glu194. 3 N-linked (GlcNAc...) asparagine glycosylation sites follow: Asn203, Asn222, and Asn280. The Nucleophile role is filled by Glu312. 5 N-linked (GlcNAc...) asparagine glycosylation sites follow: Asn427, Asn440, Asn465, Asn491, and Asn520.

It belongs to the glycosyl hydrolase 79 family.

The protein resides in the secreted. It catalyses the reaction a beta-D-glucuronoside + H2O = D-glucuronate + an alcohol. In terms of biological role, beta-glucuronidase that hydrolyzes beta-glucuronosyl and 4-O-methyl-beta-glucuronosyl residues of arabinogalactan-protein. Hydrolyzed heparan sulfate only very weakly. Has no activity on xylan from birchwood. Able to catalyze the transglycosylation of glucuronic acid (GlcA) residues from p-nitrophenyl-beta-glucuronic acid (PNP beta-GlcA) to various monosaccharide acceptors such as glucose, galactose and xylose. In Neurospora crassa (strain ATCC 24698 / 74-OR23-1A / CBS 708.71 / DSM 1257 / FGSC 987), this protein is Beta-glucuronidase.